The primary structure comprises 347 residues: Protein RecA (347 aa).

ATP is bound at residue 67 to 74; the sequence is GPESSGKT.

This sequence belongs to the RecA family.

Its subcellular location is the cytoplasm. In terms of biological role, can catalyze the hydrolysis of ATP in the presence of single-stranded DNA, the ATP-dependent uptake of single-stranded DNA by duplex DNA, and the ATP-dependent hybridization of homologous single-stranded DNAs. It interacts with LexA causing its activation and leading to its autocatalytic cleavage. The chain is Protein RecA from Helicobacter pylori (strain G27).